Consider the following 258-residue polypeptide: UPF0328 protein ECU02_0090 (258 aa).

It belongs to the UPF0328 family.

This is UPF0328 protein ECU02_0090 from Encephalitozoon cuniculi (strain GB-M1) (Microsporidian parasite).